The primary structure comprises 101 residues: MVCEKCERKLGTVITPDTWKDGARNTTESGGRKLNENKALTSKKARFDPYGKNKFAICRICKSSVHQPGSHYCQGCAYKKGICSMCGKKVLDTKNYKQTSV.

Belongs to the CRIPT family. In terms of assembly, component of the minor spliceosome, which splices U12-type introns.

It localises to the cytoplasm. Its function is as follows. As a component of the minor spliceosome, involved in the splicing of U12-type introns in pre-mRNAs. This is Cysteine-rich PDZ-binding protein (CRIPT) from Gallus gallus (Chicken).